The chain runs to 595 residues: Tectonic-3 (595 aa).

A signal peptide spans 1–22 (MCTLQLHLLLLVVLMLSETARP). Positions 23–62 (QPSSTARAFPTSWGLEPVTPEVPTSAPPDSSESPTPWTLS) are disordered. The Extracellular segment spans residues 23–575 (QPSSTARAFP…ALSRGASVQK (553 aa)). Positions 49–62 (PPDSSESPTPWTLS) are enriched in polar residues. Asparagine 167 and asparagine 336 each carry an N-linked (GlcNAc...) asparagine glycan. Residues 576 to 594 (DSLVLILCVLLLGLLNSQT) form a helical membrane-spanning segment. Residue lysine 595 is a topological domain, cytoplasmic.

This sequence belongs to the tectonic family. Part of the tectonic-like complex (also named B9 complex).

It is found in the membrane. Functionally, part of the tectonic-like complex which is required for tissue-specific ciliogenesis and may regulate ciliary membrane composition. May be involved in apoptosis regulation. Necessary for signal transduction through the sonic hedgehog (Shh) signaling pathway. The sequence is that of Tectonic-3 (Tctn3) from Mus musculus (Mouse).